Here is a 257-residue protein sequence, read N- to C-terminus: MLAKRIVPCLDVREGKVVKGVQFRNHEIVGDIVPLAARYAEEGADELVFYDITASAHDRVIDKSWVSRVAEQIDIPFCVAGGIKTIEQAREKLAFGADKISINSPALSDPSLISRLQDEFGRQCIVIGIDSFYDAVSDSYKVKQFTGDEAATKDTQWYTQDWVEEVQKRGCGEIVLNVMNQDGVRGGYDIKQLSIVRAICDVPLIASGGAGTMEHFKAVFELAKVDAALAASVFHKGIIDIGELKQYLHANNIAIRL.

Active-site residues include D11 and D130.

The protein belongs to the HisA/HisF family. In terms of assembly, heterodimer of HisH and HisF.

Its subcellular location is the cytoplasm. It catalyses the reaction 5-[(5-phospho-1-deoxy-D-ribulos-1-ylimino)methylamino]-1-(5-phospho-beta-D-ribosyl)imidazole-4-carboxamide + L-glutamine = D-erythro-1-(imidazol-4-yl)glycerol 3-phosphate + 5-amino-1-(5-phospho-beta-D-ribosyl)imidazole-4-carboxamide + L-glutamate + H(+). It functions in the pathway amino-acid biosynthesis; L-histidine biosynthesis; L-histidine from 5-phospho-alpha-D-ribose 1-diphosphate: step 5/9. In terms of biological role, IGPS catalyzes the conversion of PRFAR and glutamine to IGP, AICAR and glutamate. The HisF subunit catalyzes the cyclization activity that produces IGP and AICAR from PRFAR using the ammonia provided by the HisH subunit. The protein is Imidazole glycerol phosphate synthase subunit HisF of Shewanella frigidimarina (strain NCIMB 400).